The following is a 644-amino-acid chain: Exoribonuclease 2 (644 aa).

The RNB domain occupies 189–516 (REDLTALDFV…NHRLLKAVIK (328 aa)). One can recognise an S1 motif domain in the interval 561-643 (DTRFAAEIVD…ETRSIIARPV (83 aa)).

This sequence belongs to the RNR ribonuclease family. RNase II subfamily.

It localises to the cytoplasm. It catalyses the reaction Exonucleolytic cleavage in the 3'- to 5'-direction to yield nucleoside 5'-phosphates.. Involved in mRNA degradation. Hydrolyzes single-stranded polyribonucleotides processively in the 3' to 5' direction. The sequence is that of Exoribonuclease 2 from Escherichia coli O6:K15:H31 (strain 536 / UPEC).